The sequence spans 316 residues: Olfactory receptor 10A7 (316 aa).

Residues 1 to 25 (MICENHTRVTEFILLGFTNNPEMQV) are Extracellular-facing. Asparagine 5 is a glycosylation site (N-linked (GlcNAc...) asparagine). A helical membrane pass occupies residues 26–46 (SLFIFFLAIYTVTLLGNFLIV). Residues 47-54 (TVTSVDLA) lie on the Cytoplasmic side of the membrane. The helical transmembrane segment at 55–75 (LQTPMYFFLQNLSLLEVCFTL) threads the bilayer. Residues 76–99 (VMVPKMLVDLVSPRKIISFVGCGT) are Extracellular-facing. The helical transmembrane segment at 100-120 (QMYFFFFFGSSECFLLSMMAY) threads the bilayer. Residues 121–139 (DRFVAICNPLHYSVIMNRS) lie on the Cytoplasmic side of the membrane. A helical membrane pass occupies residues 140-160 (LCLWMAIGSWMSGVPVSMLQT). At 161–197 (AWMMALPFCGPNAVDHFFCDGPPVLKLVTVDTTMYEM) the chain is on the extracellular side. A helical membrane pass occupies residues 198–217 (QALASTLLFIMFPFCLILVS). Topologically, residues 218–237 (YTRIIITILRMSSATGRQKA) are cytoplasmic. Residues 238 to 258 (FSTCSSHLIVVSLFYGTASLT) form a helical membrane-spanning segment. The Extracellular portion of the chain corresponds to 259–271 (YLRPKSNQSPESK). The chain crosses the membrane as a helical span at residues 272-292 (KLVSLSYTVITPMLNPIIYGL). Topologically, residues 293-316 (RNNEVKGAVKRTITQKVLQKLDVF) are cytoplasmic.

This sequence belongs to the G-protein coupled receptor 1 family.

Its subcellular location is the cell membrane. In terms of biological role, odorant receptor. This Homo sapiens (Human) protein is Olfactory receptor 10A7 (OR10A7).